Consider the following 454-residue polypeptide: Bifunctional protein GlmU (454 aa).

The pyrophosphorylase stretch occupies residues 1–227; sequence MKKLSVVILA…KMEVEGANNR (227 aa). UDP-N-acetyl-alpha-D-glucosamine contacts are provided by residues 9–12, Lys-23, Gln-74, 79–80, 101–103, Gly-138, Glu-152, Asn-167, and Asn-225; these read LAAG, GT, and YGD. Asp-103 contributes to the Mg(2+) binding site. Asn-225 lines the Mg(2+) pocket. The segment at 228–248 is linker; that stretch reads LQLAALERYYQHKQAERLLLE. The segment at 249-454 is N-acetyltransferase; sequence GVMLIDPARF…AGWQRPTKKK (206 aa). UDP-N-acetyl-alpha-D-glucosamine contacts are provided by Arg-331 and Lys-349. The Proton acceptor role is filled by His-361. Residues Tyr-364 and Asn-375 each coordinate UDP-N-acetyl-alpha-D-glucosamine. Acetyl-CoA-binding positions include Ala-378, 384–385, Ser-403, Ala-421, and Arg-438; that span reads NY.

In the N-terminal section; belongs to the N-acetylglucosamine-1-phosphate uridyltransferase family. It in the C-terminal section; belongs to the transferase hexapeptide repeat family. In terms of assembly, homotrimer. The cofactor is Mg(2+).

It localises to the cytoplasm. It catalyses the reaction alpha-D-glucosamine 1-phosphate + acetyl-CoA = N-acetyl-alpha-D-glucosamine 1-phosphate + CoA + H(+). The catalysed reaction is N-acetyl-alpha-D-glucosamine 1-phosphate + UTP + H(+) = UDP-N-acetyl-alpha-D-glucosamine + diphosphate. It functions in the pathway nucleotide-sugar biosynthesis; UDP-N-acetyl-alpha-D-glucosamine biosynthesis; N-acetyl-alpha-D-glucosamine 1-phosphate from alpha-D-glucosamine 6-phosphate (route II): step 2/2. The protein operates within nucleotide-sugar biosynthesis; UDP-N-acetyl-alpha-D-glucosamine biosynthesis; UDP-N-acetyl-alpha-D-glucosamine from N-acetyl-alpha-D-glucosamine 1-phosphate: step 1/1. It participates in bacterial outer membrane biogenesis; LPS lipid A biosynthesis. Its function is as follows. Catalyzes the last two sequential reactions in the de novo biosynthetic pathway for UDP-N-acetylglucosamine (UDP-GlcNAc). The C-terminal domain catalyzes the transfer of acetyl group from acetyl coenzyme A to glucosamine-1-phosphate (GlcN-1-P) to produce N-acetylglucosamine-1-phosphate (GlcNAc-1-P), which is converted into UDP-GlcNAc by the transfer of uridine 5-monophosphate (from uridine 5-triphosphate), a reaction catalyzed by the N-terminal domain. The polypeptide is Bifunctional protein GlmU (Mannheimia succiniciproducens (strain KCTC 0769BP / MBEL55E)).